Consider the following 703-residue polypeptide: Cyclic AMP-dependent transcription factor ATF-6 beta (703 aa).

The residue at position 2 (Ala-2) is an N-acetylalanine. The transcription activation stretch occupies residues 2-86; the sequence is AELMLLSEIA…ELLPIFPDLQ (85 aa). Topologically, residues 2–396 are cytoplasmic; the sequence is AELMLLSEIA…ELKLGSGNRK (395 aa). 3 disordered regions span residues 87–114, 229–248, and 293–317; these read VKSE…PSSE, LDGS…QPKP, and EGPA…GNSC. Positions 89–114 are enriched in low complexity; sequence SEPSSPCSSSSLSSESSRLSTEPSSE. Positions 325-388 constitute a bZIP domain; the sequence is LLKRQQRMIK…EALLAENSEL (64 aa). The basic motif stretch occupies residues 327-347; the sequence is KRQQRMIKNRESACQSRRKKK. A leucine-zipper region spans residues 350 to 357; sequence LQGLEARL. The chain crosses the membrane as a helical; Signal-anchor for type II membrane protein span at residues 397 to 417; the sequence is VVCIMVFLLFIAFNFGPVSIS. At 418–703 the chain is on the lumenal side; it reads EPPSAPISPR…SHQPLYLNHP (286 aa). The segment at 447 to 479 is disordered; sequence PVQGVEPLQGSSQGPKEPQPSPTDQPSFSNLTA. Residues Asn-476 and Asn-505 are each glycosylated (N-linked (GlcNAc...) asparagine). The tract at residues 521–565 is disordered; the sequence is QRHQRGRRKIPQRAQERQKSQPRKKSPPVKAVPIQPPGPPERDSV. Residues 522–531 show a composition bias toward basic residues; the sequence is RHQRGRRKIP. N-linked (GlcNAc...) asparagine glycosylation is found at Asn-610, Asn-627, and Asn-676. The segment covering 660-676 has biased composition (polar residues); the sequence is STVPPSLRKQPSPTPGN. Residues 660–703 form a disordered region; the sequence is STVPPSLRKQPSPTPGNATGGPLPVSAASQAHQASHQPLYLNHP. The span at 685 to 696 shows a compositional bias: low complexity; sequence SAASQAHQASHQ.

The protein belongs to the bZIP family. ATF subfamily. As to quaternary structure, homodimer and heterodimer with ATF6-alpha. The dimer interacts with the nuclear transcription factor Y (NF-Y) trimer through direct binding to NF-Y subunit C (NF-YC). N-glycosylated. Post-translationally, during unfolded protein response, a fragment of approximately 60 kDa containing the cytoplasmic transcription factor domain is released by proteolysis. The cleavage is probably performed sequentially by site-1 (MBTPS1, S1P) and site-2 (MBTPS2, S2P) proteases. As to expression, ubiquitous.

The protein localises to the endoplasmic reticulum membrane. The protein resides in the nucleus. Functionally, precursor of the transcription factor form (Processed cyclic AMP-dependent transcription factor ATF-6 beta), which is embedded in the endoplasmic reticulum membrane. Endoplasmic reticulum stress promotes processing of this form, releasing the transcription factor form that translocates into the nucleus, where it activates transcription of genes involved in the unfolded protein response (UPR). Transcription factor that acts in the unfolded protein response (UPR) pathway by activating UPR target genes induced during ER stress. Binds DNA on the 5'-CCAC[GA]-3' half of the ER stress response element (ERSE) (5'-CCAATN(9)CCAC[GA]-3') when NF-Y is bound to ERSE. The chain is Cyclic AMP-dependent transcription factor ATF-6 beta (ATF6B) from Homo sapiens (Human).